The following is a 179-amino-acid chain: Cell division protein ZapC (179 aa).

Belongs to the ZapC family. In terms of assembly, interacts directly with FtsZ.

It localises to the cytoplasm. In terms of biological role, contributes to the efficiency of the cell division process by stabilizing the polymeric form of the cell division protein FtsZ. Acts by promoting interactions between FtsZ protofilaments and suppressing the GTPase activity of FtsZ. The protein is Cell division protein ZapC of Tolumonas auensis (strain DSM 9187 / NBRC 110442 / TA 4).